The sequence spans 271 residues: Dermonecrotic toxin LarSicTox-alphaIB1c (271 aa).

Residue His-3 is part of the active site. Positions 23 and 25 each coordinate Mg(2+). The active-site Nucleophile is the His-39. Disulfide bonds link Cys-43-Cys-49 and Cys-45-Cys-188. Asp-83 lines the Mg(2+) pocket. Residue Asn-248 is glycosylated (N-linked (GlcNAc...) asparagine).

It belongs to the arthropod phospholipase D family. Class II subfamily. Requires Mg(2+) as cofactor. Expressed by the venom gland.

Its subcellular location is the secreted. It carries out the reaction an N-(acyl)-sphingosylphosphocholine = an N-(acyl)-sphingosyl-1,3-cyclic phosphate + choline. It catalyses the reaction an N-(acyl)-sphingosylphosphoethanolamine = an N-(acyl)-sphingosyl-1,3-cyclic phosphate + ethanolamine. The enzyme catalyses a 1-acyl-sn-glycero-3-phosphocholine = a 1-acyl-sn-glycero-2,3-cyclic phosphate + choline. The catalysed reaction is a 1-acyl-sn-glycero-3-phosphoethanolamine = a 1-acyl-sn-glycero-2,3-cyclic phosphate + ethanolamine. Functionally, dermonecrotic toxins cleave the phosphodiester linkage between the phosphate and headgroup of certain phospholipids (sphingolipid and lysolipid substrates), forming an alcohol (often choline) and a cyclic phosphate. This toxin acts on sphingomyelin (SM). It may also act on ceramide phosphoethanolamine (CPE), lysophosphatidylcholine (LPC) and lysophosphatidylethanolamine (LPE), but not on lysophosphatidylserine (LPS), and lysophosphatidylglycerol (LPG). It acts by transphosphatidylation, releasing exclusively cyclic phosphate products as second products. Induces dermonecrosis, hemolysis, increased vascular permeability, edema, inflammatory response, and platelet aggregation. The chain is Dermonecrotic toxin LarSicTox-alphaIB1c from Loxosceles arizonica (Arizona brown spider).